The following is a 474-amino-acid chain: Ribulose bisphosphate carboxylase large chain (474 aa).

Substrate is bound by residues Asn122 and Thr172. Lys174 (proton acceptor) is an active-site residue. Residue Lys176 participates in substrate binding. Residues Lys200, Asp202, and Glu203 each contribute to the Mg(2+) site. N6-carboxylysine is present on Lys200. His293 acts as the Proton acceptor in catalysis. Positions 294, 326, and 378 each coordinate substrate.

The protein belongs to the RuBisCO large chain family. Type I subfamily. Heterohexadecamer of 8 large chains and 8 small chains; disulfide-linked. The disulfide link is formed within the large subunit homodimers. Mg(2+) is required as a cofactor. Post-translationally, the disulfide bond which can form in the large chain dimeric partners within the hexadecamer appears to be associated with oxidative stress and protein turnover.

It localises to the carboxysome. It carries out the reaction 2 (2R)-3-phosphoglycerate + 2 H(+) = D-ribulose 1,5-bisphosphate + CO2 + H2O. It catalyses the reaction D-ribulose 1,5-bisphosphate + O2 = 2-phosphoglycolate + (2R)-3-phosphoglycerate + 2 H(+). RuBisCO catalyzes two reactions: the carboxylation of D-ribulose 1,5-bisphosphate, the primary event in carbon dioxide fixation, as well as the oxidative fragmentation of the pentose substrate in the photorespiration process. Both reactions occur simultaneously and in competition at the same active site. The polypeptide is Ribulose bisphosphate carboxylase large chain (Synechococcus sp. (strain JA-3-3Ab) (Cyanobacteria bacterium Yellowstone A-Prime)).